We begin with the raw amino-acid sequence, 395 residues long: Guanine nucleotide-binding protein subunit beta-5 (395 aa).

WD repeat units lie at residues 103 to 142 (GHGNKVLCMDWCKDKRRIVSSSQDGKVIVWDSFTTNKEHA), 145 to 184 (MPCTWVMACAYAPSGCAIACGGLDNKCSVYPLTFDKNENM), 193 to 234 (MHTN…QSFH), 236 to 278 (HGAD…QAFE), 279 to 318 (THESDVNSVRYYPSGDAFASGSDDATCRLYDLRADREVAI), 320 to 362 (SKES…RVSI), and 365 to 394 (GHENRVSTLRVSPDGTAFCSGSWDHTLRVW).

This sequence belongs to the WD repeat G protein beta family. As to quaternary structure, component of a complex composed of RGS9 (isoform RGS9-1), GNB5 and RGS9BP; within this complex, the presence of GNB5 stabilizes both itself and RGS9 and increases RGS9 GTPase-activating protein (GAP) activity. Interacts with RGS7, forming the RGS7-GNB5 complex; within this complex, the presence of GNB5 increases RGS7 GTPase-activating protein (GAP) activity. Interacts with GPR158; promotes the GTPase activator activity of the RGS7-GNB5 complex in absence of glycine, in contrast GTPase activator activity of the RGS7-GNB5 complex is inhibited in presence of glycine. Interacts with RGS6. In terms of tissue distribution, isoform 1 is only detected in retina. Isoform 2 is detected in brain (at protein level). Isoform 2 is detected in brain.

It is found in the membrane. In terms of biological role, enhances GTPase-activating protein (GAP) activity of regulator of G protein signaling (RGS) proteins, such as RGS7 and RGS9, hence involved in the termination of the signaling initiated by the G protein coupled receptors (GPCRs) by accelerating the GTP hydrolysis on the G-alpha subunits, thereby promoting their inactivation. Increases RGS7 GTPase-activating protein (GAP) activity, thereby regulating mood and cognition. Increases RGS9 GTPase-activating protein (GAP) activity, hence contributes to the deactivation of G protein signaling initiated by D(2) dopamine receptors. May play an important role in neuronal signaling, including in the parasympathetic, but not sympathetic, control of heart rate. The chain is Guanine nucleotide-binding protein subunit beta-5 (Gnb5) from Mus musculus (Mouse).